A 1140-amino-acid polypeptide reads, in one-letter code: Calcium-activated potassium channel slo-1 (1140 aa).

Over 1–44 the chain is Extracellular; it reads MGEIYSPSQSKGFNQPYGYPMNCNLSRVFMEMTEEDRKCLEERK. A helical transmembrane segment spans residues 45 to 65; that stretch reads YWCFLLSSITTFCASMILVVI. The Cytoplasmic segment spans residues 66-139; the sequence is WRVVTHLCCQ…LISGQSLTGR (74 aa). The helical transmembrane segment at 140–161 threads the bilayer; that stretch reads FLVLLVFILSIGSLIIYFYDAS. Residues 162–178 are Extracellular-facing; it reads FQNFQVETCIPWQDSPS. A helical transmembrane segment spans residues 179-199; sequence QQIDLGFNIFFLVYFFIRFIA. Residues 200 to 203 lie on the Cytoplasmic side of the membrane; sequence ASDK. The helical transmembrane segment at 204 to 224 threads the bilayer; it reads VWFLLEMYSWIDFFTIPPSFV. Over 225–228 the chain is Extracellular; that stretch reads AIYL. A helical; Voltage-sensor membrane pass occupies residues 229 to 249; that stretch reads QRNWLGFRFLRALRLMTVPDI. Residues 250 to 264 are Cytoplasmic-facing; sequence LQYLNILKTSSSIRL. The helical transmembrane segment at 265–285 threads the bilayer; that stretch reads TQLVTIFVAVCLTGAGLVHLL. Residues 286-299 are Extracellular-facing; the sequence is ENSGDFFKGFINPH. The pore-forming intramembrane region spans 300–322; it reads RITYADSVYFVLVTMSTVGYGDI. Positions 316–319 match the Selectivity for potassium motif; that stretch reads TVGY. The Extracellular segment spans residues 323-331; sequence YCTTLCGRL. Residues 332-352 traverse the membrane as a helical segment; the sequence is FMIFFILFGLAMFASYVPEIA. The Cytoplasmic segment spans residues 353–1140; sequence DLIGNRQKYG…LEYEPGKRHF (788 aa). The 144-residue stretch at 371–514 folds into the RCK N-terminal 1 domain; it reads KKHIVVCGHI…DWKRGDDVIC (144 aa). The segment S7 stretch occupies residues 520-540; that stretch reads LGFIAQSCLAPGFSTMMANLF. A segment S8 region spans residues 578 to 598; it reads MTFPEAVDLLFNRLGLLLLAI. The tract at residues 797–817 is segment S9; it reads VLNGHVVVCLFADQDSPLIGL. The RCK N-terminal 2 domain maps to 799–953; it reads NGHVVVCLFA…GAKFGTNVPM (155 aa). The short motif at 955–977 is the Calcium bowl element; it reads TELVNDSNVQFLDQDDDDDPDTE. Q964, D967, D970, and D972 together coordinate Ca(2+). Residues 984–1004 are segment S10; that stretch reads FACGTAFAISVLDSLMSTTYF.

The protein belongs to the potassium channel family. Calcium-activated (TC 1.A.1.3) subfamily. Slo sub-subfamily. Homotetramer; which constitutes the calcium-activated potassium channel. Post-translationally, phosphorylated. In terms of tissue distribution, expressed in synaptic regions of the nervous system including in both the nerve ring and nerve cords, as well as in the body-wall and vulval muscle. Expressed broadly in motor neurons. Forms puncta at presynaptic terminals of neurons, muscle excitation sites, and in the dorsal nerve cord.

It is found in the cell membrane. The protein resides in the synapse. In terms of biological role, potassium channel activated by both membrane depolarization or increase in cytosolic Ca(2+) that mediates export of K(+). Its activation dampens the excitatory events that elevate the cytosolic Ca(2+) concentration and/or depolarize the cell membrane. It therefore contributes to repolarization of the membrane potential. Essential for the regulation of neurotransmitter release at synapses. Regulates longevity and age-associated decline in motor activity in mid-late life, by acting in motor neurons and through daf-16 in the intestine. When clustered in neurons, mediates ethanol-induced suppression of locomotory and egg-laying behaviors. The sequence is that of Calcium-activated potassium channel slo-1 from Caenorhabditis elegans.